The chain runs to 295 residues: Light-independent protochlorophyllide reductase iron-sulfur ATP-binding protein (295 aa).

ATP is bound by residues 39–44 (GIGKST) and Lys68. Ser43 lines the Mg(2+) pocket. Cys124 and Cys158 together coordinate [4Fe-4S] cluster. 209-210 (NR) lines the ATP pocket.

Belongs to the NifH/BchL/ChlL family. In terms of assembly, homodimer. Protochlorophyllide reductase is composed of three subunits; ChlL, ChlN and ChlB. [4Fe-4S] cluster serves as cofactor.

The enzyme catalyses chlorophyllide a + oxidized 2[4Fe-4S]-[ferredoxin] + 2 ADP + 2 phosphate = protochlorophyllide a + reduced 2[4Fe-4S]-[ferredoxin] + 2 ATP + 2 H2O. Its pathway is porphyrin-containing compound metabolism; chlorophyll biosynthesis (light-independent). Functionally, component of the dark-operative protochlorophyllide reductase (DPOR) that uses Mg-ATP and reduced ferredoxin to reduce ring D of protochlorophyllide (Pchlide) to form chlorophyllide a (Chlide). This reaction is light-independent. The L component serves as a unique electron donor to the NB-component of the complex, and binds Mg-ATP. This is Light-independent protochlorophyllide reductase iron-sulfur ATP-binding protein from Prochlorococcus marinus (strain MIT 9515).